Consider the following 489-residue polypeptide: Glycogen synthase (489 aa).

Lys15 is a binding site for ADP-alpha-D-glucose.

Belongs to the glycosyltransferase 1 family. Bacterial/plant glycogen synthase subfamily.

It carries out the reaction [(1-&gt;4)-alpha-D-glucosyl](n) + ADP-alpha-D-glucose = [(1-&gt;4)-alpha-D-glucosyl](n+1) + ADP + H(+). It functions in the pathway glycan biosynthesis; glycogen biosynthesis. Synthesizes alpha-1,4-glucan chains using ADP-glucose. This is Glycogen synthase from Francisella tularensis subsp. holarctica (strain FTNF002-00 / FTA).